A 765-amino-acid chain; its full sequence is Protein transport protein Sec23A (765 aa).

An N-acetylthreonine modification is found at Thr2. Residues Cys61, Cys66, Cys85, and Cys88 each coordinate Zn(2+). Residue Thr308 is modified to Phosphothreonine. One copy of the Gelsolin-like repeat lies at 632–718; the sequence is PEPVLLDSSS…EHGGSQARFL (87 aa).

Belongs to the SEC23/SEC24 family. SEC23 subfamily. In terms of assembly, COPII is composed of at least five proteins: the Sec23/24 complex, the Sec13/31 complex and Sar1. Interacts with SEC23IP. Interacts with HTR4. Interacts with SEC16A. Interacts with SLC6A4. Interacts (as part of the Sec23/24 complex) with SEC22B; recruits SEC22B into COPII-coated vesicles and allows the transport of this cargo from the endoplasmic reticulum to the Golgi. Interacts (via Gelsolin-like repeat) with MIA2 and MIA3; specifically involved in the transport of large cargos like the collagen COL7A1. Interacts with DDHD1. Interacts with TMEM39A. Interacts with SACM1L; this interaction is reduced in the absence of TMEM39A. Interacts with kinase FAM20C; transport of FAM20C from the endoplasmic reticulum to the Golgi is likely to be mediated by COPII vesicles. High levels in brain and fibroblasts.

The protein localises to the cytoplasmic vesicle. Its subcellular location is the COPII-coated vesicle membrane. It localises to the endoplasmic reticulum membrane. The protein resides in the cytoplasm. It is found in the cytosol. Its function is as follows. Component of the coat protein complex II (COPII) which promotes the formation of transport vesicles from the endoplasmic reticulum (ER). The coat has two main functions, the physical deformation of the endoplasmic reticulum membrane into vesicles and the selection of cargo molecules for their transport to the Golgi complex. Required for the translocation of insulin-induced glucose transporter SLC2A4/GLUT4 to the cell membrane. The protein is Protein transport protein Sec23A of Mus musculus (Mouse).